We begin with the raw amino-acid sequence, 540 residues long: Zinc finger protein 768 (540 aa).

2 disordered regions span residues 1 to 166 (MERE…FEAQ) and 239 to 258 (TGALRGPGRRGGRARGGQGP). Phosphoserine is present on residues Ser-17, Ser-18, and Ser-23. Phosphotyrosine is present on Tyr-27. At Ser-33 the chain carries Phosphoserine. Residues 34–53 (ENEEEEISQQEGSGDYEVEE) are compositionally biased toward acidic residues. Ser-62, Ser-69, Ser-76, Ser-83, Ser-90, Ser-97, Ser-104, Ser-107, Ser-111, Ser-118, and Ser-125 each carry phosphoserine. A compositionally biased stretch (low complexity) spans 62-77 (SPGFEPQSPEFEPQSP). Residues 107 to 119 (SDSQSPEFESQSP) are compositionally biased toward polar residues. Tyr-128 is subject to Phosphotyrosine. Ser-132 carries the phosphoserine modification. Tyr-135 is subject to Phosphotyrosine. A Phosphoserine modification is found at Ser-139. Phosphotyrosine is present on Tyr-142. Phosphoserine occurs at positions 144 and 147. Residues 149–166 (YESQNTELKTQSPEFEAQ) are compositionally biased toward polar residues. The residue at position 158 (Thr-158) is a Phosphothreonine. At Ser-160 the chain carries Phosphoserine. The C2H2-type 1 zinc finger occupies 261–283 (NICGICGKSFGRGSTLIQHQRIH). Thr-284 is modified (phosphothreonine). Residue Tyr-289 is modified to Phosphotyrosine. 4 consecutive C2H2-type zinc fingers follow at residues 289–311 (YKCEVCSKAFSQSSDLIKHQRTH), 317–339 (YKCPRCGKAFADSSYLLRHQRTH), 345–367 (YKCPHCGKAFGDSSYLLRHQRTH), and 373–395 (YSCTECGKCYSQNSSLRSHQRVH). 2 positions are modified to phosphoserine: Ser-295 and Ser-299. At Thr-396 the chain carries Phosphothreonine. 5 C2H2-type zinc fingers span residues 401–423 (FSCGICGKSFSQRSALIPHARSH), 429–451 (FKCPECGKRFGQSSVLAIHARTH), 457–479 (YSCPDCGKTFNRSSTLIQHQRSH), 485–507 (YRCAVCGKGFCRSSTLLQHHRVH), and 513–535 (YKCDDCGKAFSQSSDLIRHQRTH). Ser-442 carries the post-translational modification Phosphoserine.

This sequence belongs to the krueppel C2H2-type zinc-finger protein family. Interacts (via zinc-finger domains) with TP53 (via N-terminus); interaction might be facilitated by TP53 oligomerization state. Interacts with ELP3. May be phosphorylated at residue 'Ser-5' of the tandem heptapeptide repeats in the N-terminus. Phosphorylation might be increased upon RAS pathway activation and negatively regulate protein stability.

It is found in the nucleus. The protein resides in the chromosome. Functionally, binds to mammalian-wide interspersed repeat (MIRs) sequences in euchromatin and promoter regions of genes at the consensus sequence 5'-GCTGTGTG-[N20]-CCTCTCTG-3', consisting of two anchor regions connected by a linker region; the linker region probably does not contribute to the binding specificity. Required for cell homeostasis. May be involved in transcriptional regulation. The polypeptide is Zinc finger protein 768 (ZNF768) (Homo sapiens (Human)).